Here is a 159-residue protein sequence, read N- to C-terminus: uncharacterized protein (159 aa).

Positions 44, 124, and 128 each coordinate a divalent metal cation.

This sequence belongs to the DinB family.

This is an uncharacterized protein from Bacillus subtilis (strain 168).